A 697-amino-acid polypeptide reads, in one-letter code: Pentatricopeptide repeat-containing protein At5g46460, mitochondrial (697 aa).

Residues 1–36 (MWSRAIFQRFRFRAFSISHVIHGKCYRSFSVTVEFQ) constitute a mitochondrion transit peptide. 14 PPR repeats span residues 39 to 64 (EVLI…VPSP), 65 to 95 (HVSL…MPVR), 96 to 130 (DVVS…SVVS), 131 to 157 (WTAM…MPVK), 158 to 192 (DTAA…NVIS), 193 to 223 (WTTM…CIKS), 224 to 258 (TSRP…GFLY), 259 to 289 (EEYV…KVHE), 290 to 324 (QVAV…SILP), 325 to 359 (NQST…GLET), 360 to 390 (DAFV…IFKK), 391 to 425 (SIVS…NKEP), 426 to 456 (DEIT…MSSG), and 463 to 497 (KIQH…PNEM). Residues 498 to 573 (VWLALLSACR…KPGSSWVVIR (76 aa)) are type E motif. A type E(+) motif region spans residues 574–602 (GKKHEFFSGDQPHCSRIYEKLEFLREKLK). Residues 603-697 (ELGYAPDYRS…NGTCSCGDYW (95 aa)) are type DYW motif.

The protein belongs to the PPR family. PCMP-H subfamily.

It localises to the mitochondrion. In Arabidopsis thaliana (Mouse-ear cress), this protein is Pentatricopeptide repeat-containing protein At5g46460, mitochondrial (PCMP-H49).